The primary structure comprises 323 residues: DNA-directed RNA polymerase subunit alpha 1 (323 aa).

The tract at residues M1–R228 is alpha N-terminal domain (alpha-NTD). The alpha C-terminal domain (alpha-CTD) stretch occupies residues I244–K323.

It belongs to the RNA polymerase alpha chain family. In terms of assembly, homodimer. The RNAP catalytic core consists of 2 alpha, 1 beta, 1 beta' and 1 omega subunit. When a sigma factor is associated with the core the holoenzyme is formed, which can initiate transcription.

The enzyme catalyses RNA(n) + a ribonucleoside 5'-triphosphate = RNA(n+1) + diphosphate. DNA-dependent RNA polymerase catalyzes the transcription of DNA into RNA using the four ribonucleoside triphosphates as substrates. The protein is DNA-directed RNA polymerase subunit alpha 1 of Francisella tularensis subsp. novicida (strain U112).